A 305-amino-acid chain; its full sequence is Peroxisome biogenesis factor 2 (305 aa).

Topologically, residues 1–15 (MASRKENAKSANRVL) are peroxisomal matrix. The chain crosses the membrane as a helical span at residues 16–42 (RISQLDALELNKALEQLVWSQFTQCFH). Topologically, residues 43-48 (GFKPGL) are cytoplasmic. The chain crosses the membrane as a helical span at residues 49–74 (LARFEPEVKACLWVFLWRFTIYSKNA). Topologically, residues 75–98 (TVGQSVLNIKYKNDFSPNLRYQPP) are peroxisomal matrix. K84 bears the N6-acetyllysine mark. Residues 99 to 125 (SKNQKIWYAVCTIGGRWLEERCYDLFR) form a helical membrane-spanning segment. At 126–133 (NHHLASFG) the chain is on the cytoplasmic side. The chain crosses the membrane as a helical span at residues 134–160 (KVKQCVNFVIGLLKLGGLINFLIFLQR). Over 161-187 (GKFATLTERLLGIHSVFCKPQNICEVG) the chain is Peroxisomal matrix. A helical transmembrane segment spans residues 188 to 211 (FEYMNRELLWHGFAEFLIFLLPLI). The Cytoplasmic portion of the chain corresponds to 212–305 (NVQKLKAKLS…GIEMSEVNAL (94 aa)). Zn(2+) contacts are provided by C244, C247, C259, H261, C264, C267, C280, and C283. Residues 244–284 (CALCGEWPTMPHTIGCEHIFCYFCAKSSFLFDVYFTCPKCG) form an RING-type zinc finger.

The protein belongs to the pex2/pex10/pex12 family. As to quaternary structure, component of the PEX2-PEX10-PEX12 retrotranslocation channel, composed of PEX2, PEX10 and PEX12. Forms intramolecular and intermolecular disulfide bonds in response to reactive oxygen species (ROS), promoting higher stability.

It is found in the peroxisome membrane. The catalysed reaction is [E2 ubiquitin-conjugating enzyme]-S-ubiquitinyl-L-cysteine + [acceptor protein]-L-cysteine = [E2 ubiquitin-conjugating enzyme]-L-cysteine + [acceptor protein]-S-ubiquitinyl-L-cysteine.. It carries out the reaction S-ubiquitinyl-[E2 ubiquitin-conjugating enzyme]-L-cysteine + [acceptor protein]-L-lysine = [E2 ubiquitin-conjugating enzyme]-L-cysteine + N(6)-ubiquitinyl-[acceptor protein]-L-lysine.. Its pathway is protein modification; protein ubiquitination. In terms of biological role, E3 ubiquitin-protein ligase component of a retrotranslocation channel required for peroxisome organization by mediating export of the PEX5 receptor from peroxisomes to the cytosol, thereby promoting PEX5 recycling. The retrotranslocation channel is composed of PEX2, PEX10 and PEX12; each subunit contributing transmembrane segments that coassemble into an open channel that specifically allows the passage of PEX5 through the peroxisomal membrane. PEX2 also regulates peroxisome organization by acting as a E3 ubiquitin-protein ligase. PEX2 ubiquitinates PEX5 during its passage through the retrotranslocation channel: catalyzes monoubiquitination of PEX5 at 'Cys-11', a modification that acts as a signal for PEX5 extraction into the cytosol. Required for pexophagy in response to starvation by mediating ubiquitination of peroxisomal proteins, such as PEX5 and ABCD3/PMP70. Also involved in the response to reactive oxygen species (ROS) by mediating 'Lys-48'-linked polyubiquitination and subsequent degradation of PNPLA2/ATGL, thereby regulating lipolysis. This chain is Peroxisome biogenesis factor 2, found in Homo sapiens (Human).